The sequence spans 130 residues: Small ribosomal subunit protein uS8 (130 aa).

The protein belongs to the universal ribosomal protein uS8 family. As to quaternary structure, part of the 30S ribosomal subunit.

Functionally, one of the primary rRNA binding proteins, it binds directly to 16S rRNA central domain where it helps coordinate assembly of the platform of the 30S subunit. This Halorubrum lacusprofundi (strain ATCC 49239 / DSM 5036 / JCM 8891 / ACAM 34) protein is Small ribosomal subunit protein uS8.